The sequence spans 381 residues: Putative acetyl-CoA C-acetyltransferase VraB (381 aa).

Catalysis depends on cysteine 86, which acts as the Acyl-thioester intermediate. Histidine 338 functions as the Proton acceptor in the catalytic mechanism.

This sequence belongs to the thiolase-like superfamily. Thiolase family.

The chain is Putative acetyl-CoA C-acetyltransferase VraB (vraB) from Staphylococcus haemolyticus (strain JCSC1435).